A 148-amino-acid polypeptide reads, in one-letter code: UPF0178 protein Pcar_2632 (148 aa).

Belongs to the UPF0178 family.

This chain is UPF0178 protein Pcar_2632, found in Syntrophotalea carbinolica (strain DSM 2380 / NBRC 103641 / GraBd1) (Pelobacter carbinolicus).